A 509-amino-acid chain; its full sequence is MNNVFDQYEVWFVTGAQLLYGGDAVIAVDAHSNEMVNGLNESGKLPVKVVYKGTANSSKEVEAVFKAANNDDKCVGVITWMHTFSPAKMWIHGLQQLKKPLLHLHTQFNKEIPWDTMDMDFMNLNQSAHGDREFGHICTRMRIRRKVVVGYWKEEETLHKIAVWMRVCAGWADSQDMLIIRFGDQMNNVAVTDGDKVEAEQRMGYHVDYCPASELMEYHKDIKNADVDALVATYFNDYDHDASLEDKSTEAYQKVWNAAKAELALRAILKAKGAKGFTTNFDDLGQTDGSYFDQIPGLASQRLMAEGYGFGAEGDWKSAALYRTVWVMNQGLPKGCSFLEDYTLNFDGANSSILQSHMLEICPLIAANKPRLEVHFLGIGIRKSQTARLVFTSKTGTGCTATVVDMGNRFRLIVNDVECIEPKPLPKLPVASALWIPMPNLEVGAGAWILAGGTHHSCFSYDLTAEYWEDYAEIAGIEMVHINKDTTISCFKKELRMNEVYYMLNKALC.

Mn(2+)-binding residues include glutamate 313, glutamate 340, histidine 357, and histidine 456.

It belongs to the arabinose isomerase family. Requires Mn(2+) as cofactor.

The enzyme catalyses beta-L-arabinopyranose = L-ribulose. Its pathway is carbohydrate degradation; L-arabinose degradation via L-ribulose; D-xylulose 5-phosphate from L-arabinose (bacterial route): step 1/3. Functionally, catalyzes the conversion of L-arabinose to L-ribulose. This chain is L-arabinose isomerase, found in Bacteroides thetaiotaomicron (strain ATCC 29148 / DSM 2079 / JCM 5827 / CCUG 10774 / NCTC 10582 / VPI-5482 / E50).